We begin with the raw amino-acid sequence, 495 residues long: Phosphomethylpyrimidine synthase (495 aa).

Substrate-binding positions include N125, M154, Y183, H219, 239-241 (SRG), 280-283 (DGLR), and E319. H323 contacts Zn(2+). Y346 is a substrate binding site. H387 contacts Zn(2+). The [4Fe-4S] cluster site is built by C467, C470, and C475.

The protein belongs to the ThiC family. [4Fe-4S] cluster is required as a cofactor.

It carries out the reaction 5-amino-1-(5-phospho-beta-D-ribosyl)imidazole + S-adenosyl-L-methionine = 4-amino-2-methyl-5-(phosphooxymethyl)pyrimidine + CO + 5'-deoxyadenosine + formate + L-methionine + 3 H(+). It participates in cofactor biosynthesis; thiamine diphosphate biosynthesis. Catalyzes the synthesis of the hydroxymethylpyrimidine phosphate (HMP-P) moiety of thiamine from aminoimidazole ribotide (AIR) in a radical S-adenosyl-L-methionine (SAM)-dependent reaction. The protein is Phosphomethylpyrimidine synthase of Leptospira interrogans serogroup Icterohaemorrhagiae serovar Lai (strain 56601).